A 741-amino-acid chain; its full sequence is MAPSFDTLSEQDLHEEEEEEIDFSDLKEQFEVKLEEGLDTFIVIDGLPIVPEESRQKLIKFLLRKLNAVGHTSEDAVFMPTNDKNMSEGFAFVEYETPEQAIAAVKQLHGTPLDKKHTLAVNKLMDIDRYGREGRIDEEYKPPTVEPFKEKEHLRSWLSDPNARDQFALYRNDKVGVFWNNKNNPPENVVDRAHWTQLFVQWSPKGTYLASVHPQGVQLWGGPAFSKQKQFPHPFVQLVEFSPGESYLTTWSSRPIQVEEGHPVLSFEEDGKNIIVWDIVSGKPLRSFVSHDLAGGPVEGDAAPKKKVQWPAFKWSADEKYVARMLQGQSISIYELPRMNLLGKTSVKIDGVMDFEWSPATVTRDGVKQYEQLLSFWTPEIGSNPARVALMSVPSKEIVRTRNLFNVSDVKLHWQSQGTYVCVKVDRHSKSKKSMATNLEIFRVREKGVPVEVVDSLKDTVINFAWEPNGGRFVLITTGEAPSGAAVLPKTSVSFFAPEKKGPQAGNFKLVRTIEKKTSNAIYWSPKGRFVVVATVHSQSNFDLDFWDMDFEGEKAEGEKDLAANLQLMKTVEHYGVTDIDWDPTGRYVVSSASVWTHSMENGWNIHTFAGQTLAEHPTDKFKQFVWRPRPPTLLSKEEQKQVRKNLREYSKEFDEEDKYAVDIANTAVVETRKRVLNEWVAWLRREKELMAEEKDAYGIPEDADDAKVAKDAPPVSEDQGEAVVEEIVEEIVEENEEVIG.

A compositionally biased stretch (polar residues) spans 1 to 10 (MAPSFDTLSE). The tract at residues 1–21 (MAPSFDTLSEQDLHEEEEEEI) is disordered. One can recognise an RRM domain in the interval 40–126 (TFIVIDGLPI…HTLAVNKLMD (87 aa)). WD repeat units follow at residues 193 to 230 (AHWT…KQKQ), 232 to 289 (PHPF…RSFV), 303 to 344 (APKK…LLGK), 514 to 557 (IEKK…EKAE), and 572 to 610 (VEHY…HTFA). Residues 696 to 723 (DAYGIPEDADDAKVAKDAPPVSEDQGEA) are disordered.

It belongs to the eIF-3 subunit B family. In terms of assembly, component of the eukaryotic translation initiation factor 3 (eIF-3) complex.

The protein localises to the cytoplasm. RNA-binding component of the eukaryotic translation initiation factor 3 (eIF-3) complex, which is involved in protein synthesis of a specialized repertoire of mRNAs and, together with other initiation factors, stimulates binding of mRNA and methionyl-tRNAi to the 40S ribosome. The eIF-3 complex specifically targets and initiates translation of a subset of mRNAs involved in cell proliferation. The chain is Eukaryotic translation initiation factor 3 subunit B (prt1) from Aspergillus oryzae (strain ATCC 42149 / RIB 40) (Yellow koji mold).